Consider the following 316-residue polypeptide: uncharacterized protein (316 aa).

The protein belongs to the asfivirus F317L family.

It is found in the virion. This is an uncharacterized protein from Ornithodoros (relapsing fever ticks).